The following is a 96-amino-acid chain: DNA-directed RNA polymerase subunit Rpo11 (96 aa).

The protein belongs to the archaeal Rpo11/eukaryotic RPB11/RPC19 RNA polymerase subunit family. In terms of assembly, part of the RNA polymerase complex.

It is found in the cytoplasm. The catalysed reaction is RNA(n) + a ribonucleoside 5'-triphosphate = RNA(n+1) + diphosphate. In terms of biological role, DNA-dependent RNA polymerase (RNAP) catalyzes the transcription of DNA into RNA using the four ribonucleoside triphosphates as substrates. This chain is DNA-directed RNA polymerase subunit Rpo11, found in Nanoarchaeum equitans (strain Kin4-M).